We begin with the raw amino-acid sequence, 338 residues long: Clathrin light chain 1 (338 aa).

A disordered region spans residues 1–111; the sequence is MATFDDGDFP…NEMREEGFQR (111 aa). 2 stretches are compositionally biased toward polar residues: residues 29–47 and 61–73; these read SEAQ…SSFN and SSPN…PFES. The segment covering 102-111 has biased composition (basic and acidic residues); the sequence is NEMREEGFQR. Residues 102 to 163 form an involved in binding clathrin heavy chain region; the sequence is NEMREEGFQR…TIETNKTDNR (62 aa). Positions 122–142 form a coiled coil; sequence LEEKEKKEKEMRNQIITEAED. Positions 192-338 are disordered; that stretch reads IPREVPNIEK…VTEAEGTKAE (147 aa). A compositionally biased stretch (basic and acidic residues) spans 197–212; it reads PNIEKKRGKKDPDKKP. Residues 241–253 are compositionally biased toward pro residues; the sequence is NPPPHMMPPPPPA. The span at 254–304 shows a compositional bias: basic and acidic residues; it reads KDAKDGKDAKDGKDAKTGKDGKDAKGGKDAKDLKDGKPADPKVTEEKRPSP.

The protein belongs to the clathrin light chain family. Clathrin coats are formed from molecules containing 3 heavy chains and 3 light chains.

Its subcellular location is the cytoplasmic vesicle membrane. It is found in the membrane. The protein resides in the coated pit. Clathrin is the major protein of the polyhedral coat of coated pits and vesicles. In Arabidopsis thaliana (Mouse-ear cress), this protein is Clathrin light chain 1.